The primary structure comprises 557 residues: Phosphoacetylglucosamine mutase (557 aa).

S67 acts as the Phosphoserine intermediate in catalysis. Mg(2+) contacts are provided by S67, D298, D300, and D302. Residue S67 is modified to Phosphoserine. Residues 395–397, 522–526, and R531 contribute to the substrate site; these read EAN and RASGT.

This sequence belongs to the phosphohexose mutase family. The cofactor is Mg(2+).

It is found in the cytoplasm. It localises to the nucleus. It carries out the reaction N-acetyl-alpha-D-glucosamine 1-phosphate = N-acetyl-D-glucosamine 6-phosphate. It participates in nucleotide-sugar biosynthesis; UDP-N-acetyl-alpha-D-glucosamine biosynthesis; N-acetyl-alpha-D-glucosamine 1-phosphate from alpha-D-glucosamine 6-phosphate (route I): step 2/2. Catalyzes the conversion of GlcNAc-6-P into GlcNAc-1-P during the synthesis of uridine diphosphate/UDP-GlcNAc, which is a biosynthetic precursor of chitin and also supplies the amino sugars for N-linked oligosaccharides of glycoproteins. Also has phosphoglucomutase activity. This Saccharomyces cerevisiae (strain ATCC 204508 / S288c) (Baker's yeast) protein is Phosphoacetylglucosamine mutase.